We begin with the raw amino-acid sequence, 29 residues long: Cyclotide mra2 (29 aa).

Disulfide bonds link C4/C19, C8/C21, and C13/C26.

Post-translationally, this is a cyclic peptide. In terms of processing, contains 3 disulfide bonds.

In terms of biological role, probably participates in a plant defense mechanism. In Melicytus ramiflorus (Whitey wood), this protein is Cyclotide mra2.